We begin with the raw amino-acid sequence, 262 residues long: Tritrans,polycis-undecaprenyl-diphosphate synthase (GGDP specific) (262 aa).

The active site involves Asp40. A Mg(2+)-binding site is contributed by Asp40. Substrate contacts are provided by residues 41 to 44 (GNRR), Trp45, and 85 to 87 (SAE). Asn88 (proton acceptor) is an active-site residue. Substrate is bound by residues Arg92, Arg211, and 217–219 (RIS). Glu230 provides a ligand contact to Mg(2+).

This sequence belongs to the UPP synthase family. In terms of assembly, homodimer. Mg(2+) is required as a cofactor.

The enzyme catalyses geranylgeranyl diphosphate + 7 isopentenyl diphosphate = tri-trans,hepta-cis-undecaprenyl diphosphate + 7 diphosphate. Generates tritrans,heptacis-undecaprenyl diphosphate from isopentenyl pyrophosphate (IPP) and geranylgeranyl diphosphate. It is probably the precursor of glycosyl carrier lipids. The polypeptide is Tritrans,polycis-undecaprenyl-diphosphate synthase (GGDP specific) (uppS) (Sulfolobus acidocaldarius (strain ATCC 33909 / DSM 639 / JCM 8929 / NBRC 15157 / NCIMB 11770)).